A 375-amino-acid chain; its full sequence is Putative glutamate--cysteine ligase 2 (375 aa).

The protein belongs to the glutamate--cysteine ligase type 2 family. YbdK subfamily.

The catalysed reaction is L-cysteine + L-glutamate + ATP = gamma-L-glutamyl-L-cysteine + ADP + phosphate + H(+). Its function is as follows. ATP-dependent carboxylate-amine ligase which exhibits weak glutamate--cysteine ligase activity. This chain is Putative glutamate--cysteine ligase 2, found in Sorangium cellulosum (strain So ce56) (Polyangium cellulosum (strain So ce56)).